The chain runs to 155 residues: Ubiquinone biosynthesis protein COQ4 homolog, mitochondrial (155 aa).

The protein belongs to the COQ4 family. As to quaternary structure, component of a multi-subunit COQ enzyme complex. Zn(2+) is required as a cofactor.

It is found in the mitochondrion inner membrane. It catalyses the reaction a 4-hydroxy-3-methoxy-5-(all-trans-polyprenyl)benzoate + H(+) = a 2-methoxy-6-(all-trans-polyprenyl)phenol + CO2. It participates in cofactor biosynthesis; ubiquinone biosynthesis. Its function is as follows. Lyase that catalyzes the C1-decarboxylation of 4-hydroxy-3-methoxy-5-(all-trans-polyprenyl)benzoic acid into 2-methoxy-6-(all-trans-polyprenyl)phenol during ubiquinone biosynthesis. The polypeptide is Ubiquinone biosynthesis protein COQ4 homolog, mitochondrial (Cryptosporidium hominis).